The chain runs to 420 residues: Uteroferrin-associated basic protein 2 (420 aa).

The N-terminal stretch at Met1 to Cys25 is a signal peptide. 3 N-linked (GlcNAc...) asparagine glycosylation sites follow: Asn225, Asn271, and Asn343.

This sequence belongs to the serpin family. UTMP subfamily.

It localises to the secreted. Its subcellular location is the extracellular space. This chain is Uteroferrin-associated basic protein 2, found in Sus scrofa (Pig).